The sequence spans 1145 residues: Trafficking protein particle complex subunit 10 (1145 aa).

The protein belongs to the TMEM1 family. Part of the multisubunit TRAPP (transport protein particle) complex. Interacts with Shal (via C-terminal dendritic targeting motif). As to expression, co-expressed with Shal in the nervous system.

The protein resides in the golgi apparatus. It localises to the cis-Golgi network. The protein localises to the cell projection. It is found in the dendrite. Its subcellular location is the perikaryon. Functionally, may play a role in vesicular transport from endoplasmic reticulum to Golgi. Has a role in one of the several mechanisms underlying dendritic localization of Shal channels. In Drosophila melanogaster (Fruit fly), this protein is Trafficking protein particle complex subunit 10 (SIDL).